The sequence spans 203 residues: Cytochrome c oxidase assembly protein CtaG (203 aa).

At M1 to R16 the chain is on the cytoplasmic side. The helical; Signal-anchor for type II membrane protein transmembrane segment at S17 to S39 threads the bilayer. The Periplasmic segment spans residues V40–S203.

It belongs to the COX11/CtaG family.

It is found in the cell inner membrane. Its function is as follows. Exerts its effect at some terminal stage of cytochrome c oxidase synthesis, probably by being involved in the insertion of the copper B into subunit I. The protein is Cytochrome c oxidase assembly protein CtaG of Brucella anthropi (strain ATCC 49188 / DSM 6882 / CCUG 24695 / JCM 21032 / LMG 3331 / NBRC 15819 / NCTC 12168 / Alc 37) (Ochrobactrum anthropi).